Here is a 524-residue protein sequence, read N- to C-terminus: Probable cytochrome P450 519C1 (524 aa).

The chain crosses the membrane as a helical span at residues 1–21 (MNILLLIFYFLVCFLIFDFIK). Position 470 (C470) interacts with heme.

This sequence belongs to the cytochrome P450 family. The cofactor is heme.

The protein resides in the membrane. This is Probable cytochrome P450 519C1 (cyp519C1) from Dictyostelium discoideum (Social amoeba).